The following is a 162-amino-acid chain: Endoribonuclease YbeY (162 aa).

Positions 128, 132, and 138 each coordinate Zn(2+).

Belongs to the endoribonuclease YbeY family. It depends on Zn(2+) as a cofactor.

The protein resides in the cytoplasm. In terms of biological role, single strand-specific metallo-endoribonuclease involved in late-stage 70S ribosome quality control and in maturation of the 3' terminus of the 16S rRNA. The polypeptide is Endoribonuclease YbeY (Lactococcus lactis subsp. lactis (strain IL1403) (Streptococcus lactis)).